The sequence spans 925 residues: Aspulvinone E synthetase melA (925 aa).

Residues 11 to 434 (ETAAARNGDG…GGRAKETIII (424 aa)) form an adenylation (A) domain region. In terms of domain architecture, Carrier spans 564-644 (SPKNDFEKGL…ELAAALDNLY (81 aa)). S601 bears the O-(pantetheine 4'-phosphoryl)serine mark. Residues 663–923 (PLWLVHPGAG…KILRSALAER (261 aa)) are thioesterase (TE) domain.

This sequence belongs to the NRP synthetase family.

Its subcellular location is the cytoplasm. It catalyses the reaction 2 3-(4-hydroxyphenyl)pyruvate + AH2 + 2 ATP + O2 = aspulvinone E + A + 2 AMP + CO2 + 2 diphosphate + H2O + H(+). Its function is as follows. Nonribosomal peptide synthase; part of the gene cluster that mediates the biosynthesis of Asp-melanin, a pigment that confers resistance against UV light and hampers phagocytosis by soil amoeba. The nonribosomal peptide synthase melA converts 4-hydroxyphenylpyruvate (4-HPPA) to aspulvinone E. The tyrosinase tyrP then performs hydroxylations of both aromatic moieties of aspulvinone E. The product of tyrP is highly unstable, and, due to the high reactivity of methides and ortho-diquinones, the polymeric Asp-melanin forms spontaneously. The chain is Aspulvinone E synthetase melA from Aspergillus terreus (strain NIH 2624 / FGSC A1156).